A 289-amino-acid polypeptide reads, in one-letter code: MKKIKVKAYAKINLSLDVLGKREDGYHEISTIMQSIDLADILEFEKSEIVKVFCNDHRVPLGEDNLIVKVINLLKEKYQMEEGVLVKLDKRIPLAAGLAGGSADAAATIVALDKLWNLNMSKEEKKEIALKVGADVPFCLEGGTKLAKGIGEIFEDLKITSMNLLLVKPDIEISTKEIYDKWDRLNFKSHHATVPVVQAIQEGNIYKIAENIKNDLELVTSQKYGIINKIKEELLKKGALGCAMSGSGPTVYGIFDDLEKLRKAYEDLKEVYSFVFFSKTIDKGLELYE.

Lys-11 is a catalytic residue. 93–103 serves as a coordination point for ATP; it reads PLAAGLAGGSA. The active site involves Asp-135.

The protein belongs to the GHMP kinase family. IspE subfamily.

It carries out the reaction 4-CDP-2-C-methyl-D-erythritol + ATP = 4-CDP-2-C-methyl-D-erythritol 2-phosphate + ADP + H(+). Its pathway is isoprenoid biosynthesis; isopentenyl diphosphate biosynthesis via DXP pathway; isopentenyl diphosphate from 1-deoxy-D-xylulose 5-phosphate: step 3/6. Its function is as follows. Catalyzes the phosphorylation of the position 2 hydroxy group of 4-diphosphocytidyl-2C-methyl-D-erythritol. In Thermoanaerobacter pseudethanolicus (strain ATCC 33223 / 39E) (Clostridium thermohydrosulfuricum), this protein is 4-diphosphocytidyl-2-C-methyl-D-erythritol kinase.